A 43-amino-acid polypeptide reads, in one-letter code: Defensin (43 aa).

3 disulfide bridges follow: cysteine 3–cysteine 34, cysteine 20–cysteine 39, and cysteine 24–cysteine 41.

It belongs to the invertebrate defensin family. Type 1 subfamily.

The protein resides in the secreted. Functionally, antibacterial peptide. Affects Gram-positive bacteria M.luteus, B.megaterium, A.viridans, S.aureus and S.saprophyticus. Moderate activity against P.acidilactici and B.subtilis QB935. Also affects Gram-negative bacterium, D22 form of E.coli. The chain is Defensin from Pyrrhocoris apterus (Sap sucking bug).